The sequence spans 37 residues: Fructose-bisphosphate aldolase A (37 aa).

The protein belongs to the class I fructose-bisphosphate aldolase family. As to quaternary structure, tetramer.

The catalysed reaction is beta-D-fructose 1,6-bisphosphate = D-glyceraldehyde 3-phosphate + dihydroxyacetone phosphate. It functions in the pathway carbohydrate degradation; glycolysis; D-glyceraldehyde 3-phosphate and glycerone phosphate from D-glucose: step 4/4. Functionally, plays a key role in glycolysis and gluconeogenesis. This chain is Fructose-bisphosphate aldolase A, found in Thunnus albacares (Yellowfin tuna).